A 251-amino-acid polypeptide reads, in one-letter code: Triosephosphate isomerase (251 aa).

9-11 contacts substrate; sequence NWK. His95 (electrophile) is an active-site residue. Glu167 (proton acceptor) is an active-site residue. Residues Gly173, Ser213, and 234–235 each bind substrate; that span reads GG. Phosphoserine is present on Ser213.

It belongs to the triosephosphate isomerase family. In terms of assembly, homodimer.

It localises to the cytoplasm. It carries out the reaction D-glyceraldehyde 3-phosphate = dihydroxyacetone phosphate. It functions in the pathway carbohydrate biosynthesis; gluconeogenesis. The protein operates within carbohydrate degradation; glycolysis; D-glyceraldehyde 3-phosphate from glycerone phosphate: step 1/1. Functionally, involved in the gluconeogenesis. Catalyzes stereospecifically the conversion of dihydroxyacetone phosphate (DHAP) to D-glyceraldehyde-3-phosphate (G3P). This Bacillus cereus (strain ATCC 10987 / NRS 248) protein is Triosephosphate isomerase.